A 492-amino-acid chain; its full sequence is Stromelysin-3 (492 aa).

The N-terminal stretch at 1 to 35 (MARAACLLRAISRVLLLPLPLLLLLLLLLPSPLMA) is a signal peptide. Residues 36 to 101 (RARPPESHRH…VLNARNRQKR (66 aa)) constitute a propeptide, activation peptide. A Cysteine switch motif is present at residues 82–89 (LRCGVPDL). Positions 84, 168, and 170 each coordinate Zn(2+). 4 residues coordinate Ca(2+): D175, G176, G178, and I180. Residues H183, H196, and H219 each coordinate Zn(2+). The active site involves E220. Zn(2+)-binding residues include H223 and H229. Hemopexin repeat units lie at residues 295 to 343 (PDVC…WQGL), 344 to 386 (PSPV…KLGL), 388 to 436 (GSPV…WRGV), and 437 to 484 (PSEI…FFDC). C298 and C484 are joined by a disulfide.

It belongs to the peptidase M10A family. Ca(2+) serves as cofactor. The cofactor is Zn(2+). In terms of processing, the precursor is cleaved by a furin endopeptidase. As to expression, specifically expressed in the mammary gland during apoptosis.

It localises to the secreted. The protein resides in the extracellular space. It is found in the extracellular matrix. May play an important role in the progression of epithelial malignancies. The sequence is that of Stromelysin-3 (Mmp11) from Mus musculus (Mouse).